The chain runs to 348 residues: RNA 3'-terminal phosphate cyclase (348 aa).

Residues Gln-101 and 286 to 289 (HMAD) contribute to the ATP site. His-312 functions as the Tele-AMP-histidine intermediate in the catalytic mechanism.

The protein belongs to the RNA 3'-terminal cyclase family. Type 1 subfamily.

The protein resides in the cytoplasm. It carries out the reaction a 3'-end 3'-phospho-ribonucleotide-RNA + ATP = a 3'-end 2',3'-cyclophospho-ribonucleotide-RNA + AMP + diphosphate. Its function is as follows. Catalyzes the conversion of 3'-phosphate to a 2',3'-cyclic phosphodiester at the end of RNA. The mechanism of action of the enzyme occurs in 3 steps: (A) adenylation of the enzyme by ATP; (B) transfer of adenylate to an RNA-N3'P to produce RNA-N3'PP5'A; (C) and attack of the adjacent 2'-hydroxyl on the 3'-phosphorus in the diester linkage to produce the cyclic end product. The biological role of this enzyme is unknown but it is likely to function in some aspects of cellular RNA processing. The chain is RNA 3'-terminal phosphate cyclase from Pyrobaculum aerophilum (strain ATCC 51768 / DSM 7523 / JCM 9630 / CIP 104966 / NBRC 100827 / IM2).